The chain runs to 142 residues: Hemoglobin subunit alpha (142 aa).

The region spanning V2 to R142 is the Globin domain. S4 bears the Phosphoserine mark. Residue K8 is modified to N6-succinyllysine. T9 is modified (phosphothreonine). K12 bears the N6-succinyllysine mark. The residue at position 17 (K17) is an N6-acetyllysine; alternate. The residue at position 17 (K17) is an N6-succinyllysine; alternate. The residue at position 41 (K41) is an N6-succinyllysine. S50 carries the post-translational modification Phosphoserine. Position 59 (H59) interacts with O2. H88 contributes to the heme b binding site. At S103 the chain carries Phosphoserine. At T109 the chain carries Phosphothreonine. Residues S125 and S132 each carry the phosphoserine modification. Phosphothreonine is present on residues T135 and T138. S139 is subject to Phosphoserine.

This sequence belongs to the globin family. As to quaternary structure, heterotetramer of two alpha chains and two beta chains. As to expression, red blood cells.

In terms of biological role, involved in oxygen transport from the lung to the various peripheral tissues. Hemopressin acts as an antagonist peptide of the cannabinoid receptor CNR1. Hemopressin-binding efficiently blocks cannabinoid receptor CNR1 and subsequent signaling. The chain is Hemoglobin subunit alpha (HBA) from Equus przewalskii (Przewalski's horse).